The chain runs to 198 residues: Density-regulated protein (198 aa).

The tract at residues Gln76–Thr110 is disordered. Polar residues predominate over residues Glu77–Ser87. Residues Lys95–Thr110 show a composition bias toward basic residues. Positions Ile115–Trp182 constitute an SUI1 domain.

Belongs to the DENR family.

May be involved in the translation of target mRNAs by scanning and recognition of the initiation codon. Involved in translation initiation; promotes recruitment of aminoacetyled initiator tRNA to P site of 40S ribosomes. Can promote release of deacylated tRNA and mRNA from recycled 40S subunits following ABCE1-mediated dissociation of post-termination ribosomal complexes into subunits. This is Density-regulated protein (denr) from Xenopus laevis (African clawed frog).